The chain runs to 221 residues: Ribosomal RNA small subunit methyltransferase G (221 aa).

S-adenosyl-L-methionine is bound by residues glycine 85, leucine 90, 138-139, and arginine 151; that span reads AE.

It belongs to the methyltransferase superfamily. RNA methyltransferase RsmG family.

The protein resides in the cytoplasm. The enzyme catalyses guanosine(527) in 16S rRNA + S-adenosyl-L-methionine = N(7)-methylguanosine(527) in 16S rRNA + S-adenosyl-L-homocysteine. In terms of biological role, specifically methylates the N7 position of guanine in position 527 of 16S rRNA. This Caulobacter sp. (strain K31) protein is Ribosomal RNA small subunit methyltransferase G.